Here is a 623-residue protein sequence, read N- to C-terminus: Bifunctional enzyme CysN/CysC (623 aa).

Residues 1–450 are sulfate adenylyltransferase; sequence MQSVIAYLKQ…HVARARIKGQ (450 aa). In terms of domain architecture, tr-type G spans 14 to 228; that stretch reads KPLLRFITCG…YLEALEPADV (215 aa). A G1 region spans residues 23–30; it reads GSVDDGKS. 23-30 is a binding site for GTP; that stretch reads GSVDDGKS. The interval 81-85 is G2; sequence GITID. A G3 region spans residues 102-105; that stretch reads DCPG. GTP-binding positions include 102 to 106 and 157 to 160; these read DCPGH and NKMD. The tract at residues 157–160 is G4; sequence NKMD. Residues 194–196 form a G5 region; it reads SAL. An adenylyl-sulfate kinase region spans residues 451-623; that stretch reads TPKVLWFTGL…VLSLLGVEGK (173 aa). 459–466 provides a ligand contact to ATP; sequence GLSGAGKS. Serine 533 functions as the Phosphoserine intermediate in the catalytic mechanism.

It in the C-terminal section; belongs to the APS kinase family. The protein in the N-terminal section; belongs to the TRAFAC class translation factor GTPase superfamily. Classic translation factor GTPase family. CysN/NodQ subfamily. Heterodimer composed of CysD, the smaller subunit, and CysNC.

It carries out the reaction sulfate + ATP + H(+) = adenosine 5'-phosphosulfate + diphosphate. The catalysed reaction is adenosine 5'-phosphosulfate + ATP = 3'-phosphoadenylyl sulfate + ADP + H(+). It functions in the pathway sulfur metabolism; hydrogen sulfide biosynthesis; sulfite from sulfate: step 1/3. The protein operates within sulfur metabolism; hydrogen sulfide biosynthesis; sulfite from sulfate: step 2/3. With CysD forms the ATP sulfurylase (ATPS) that catalyzes the adenylation of sulfate producing adenosine 5'-phosphosulfate (APS) and diphosphate, the first enzymatic step in sulfur assimilation pathway. APS synthesis involves the formation of a high-energy phosphoric-sulfuric acid anhydride bond driven by GTP hydrolysis by CysN coupled to ATP hydrolysis by CysD. Functionally, APS kinase catalyzes the synthesis of activated sulfate. This chain is Bifunctional enzyme CysN/CysC (cysNC), found in Xylella fastidiosa (strain Temecula1 / ATCC 700964).